The chain runs to 706 residues: Elongation factor G 1 (706 aa).

One can recognise a tr-type G domain in the interval 8-290 (NRYRNIGICA…AVIDYLPAPT (283 aa)). Residues 17–24 (AHVDAGKT), 88–92 (DTPGH), and 142–145 (NKMD) contribute to the GTP site.

Belongs to the TRAFAC class translation factor GTPase superfamily. Classic translation factor GTPase family. EF-G/EF-2 subfamily.

The protein localises to the cytoplasm. In terms of biological role, catalyzes the GTP-dependent ribosomal translocation step during translation elongation. During this step, the ribosome changes from the pre-translocational (PRE) to the post-translocational (POST) state as the newly formed A-site-bound peptidyl-tRNA and P-site-bound deacylated tRNA move to the P and E sites, respectively. Catalyzes the coordinated movement of the two tRNA molecules, the mRNA and conformational changes in the ribosome. The chain is Elongation factor G 1 from Pseudomonas aeruginosa (strain ATCC 15692 / DSM 22644 / CIP 104116 / JCM 14847 / LMG 12228 / 1C / PRS 101 / PAO1).